We begin with the raw amino-acid sequence, 393 residues long: Staphopain B (393 aa).

The first 36 residues, 1 to 36, serve as a signal peptide directing secretion; it reads MNSSYKSRVFNIISIIMVSMLILSLGAFANNNKAKA. Residues 37 to 219 constitute a propeptide that is removed on maturation; that stretch reads DSHSKQLEIN…KVEENEAIQE (183 aa). Active-site residues include Cys243, His340, and Asn360.

Belongs to the peptidase C47 family. In the cytoplasm, prematurely activated/folded SspB forms a stable non-covalent complex with SspC. Post-translationally, proteolytically cleaved by staphylococcal serine protease (SspA).

The protein resides in the secreted. Its activity is regulated as follows. Prematurely activated/folded staphopain B is inhibited by staphostatin B (SspC), which is probably required to protect staphylococcal cytoplasmic proteins from degradation by SspB. Functionally, cysteine protease that plays an important role in the inhibition of host innate immune response. Degrades host elastin, fibrogen, fibronectin and kininogen. Blocks phagocytosis of opsonised S.aureus by neutrophils and monocytes by inducing their death in a proteolytic activity-dependent manner. Decreases surface expression of the 'don't eat me' signal CD31 on neutrophils. Cleaves host galectin-3/LGALS3, thereby inhibiting the neutrophil-activating ability of the lectin. The polypeptide is Staphopain B (sspB) (Staphylococcus aureus (strain MSSA476)).